The primary structure comprises 173 residues: Disulfide bond formation protein B (173 aa).

The Cytoplasmic portion of the chain corresponds to 1-14 (MIEFLRRIAAHRLA). A helical transmembrane segment spans residues 15 to 31 (WSLLAASALFLELSALF). Residues 32–49 (FQHVLGLHPCVMCVYERI) lie on the Periplasmic side of the membrane. Cys41 and Cys44 are disulfide-bonded. A helical membrane pass occupies residues 50–65 (ATLGVLTAGLLGMVAP). At 66-72 (QKWYVRW) the chain is on the cytoplasmic side. The chain crosses the membrane as a helical span at residues 73-90 (SALLLWGSSAFWGLKLAL). The Periplasmic segment spans residues 91 to 145 (KHVDYQVNPSPFNVCEGFVDFPSWAPLDQWIPWMFYPDGDCSEVTWQFLSFSMPQ). Cys105 and Cys131 are disulfide-bonded. Residues 146 to 164 (WLVAIFAVYLLVFVVVAIG) form a helical membrane-spanning segment. The Cytoplasmic portion of the chain corresponds to 165–173 (NLVKGRCCS).

This sequence belongs to the DsbB family.

The protein resides in the cell inner membrane. Functionally, required for disulfide bond formation in some periplasmic proteins. Acts by oxidizing the DsbA protein. The chain is Disulfide bond formation protein B from Aeromonas hydrophila subsp. hydrophila (strain ATCC 7966 / DSM 30187 / BCRC 13018 / CCUG 14551 / JCM 1027 / KCTC 2358 / NCIMB 9240 / NCTC 8049).